The primary structure comprises 191 residues: Programmed cell death protein 6 (191 aa).

An N-acetylalanine modification is found at Ala2. 5 EF-hand domains span residues 23 to 58 (PDQS…GTWT), 59 to 89 (PFNP…TGVW), 90 to 125 (KYIT…FGYR), 126 to 161 (LSDQ…LQRL), and 162 to 191 (TDIF…FSIV). Positions 36, 38, 40, 42, and 47 each coordinate Ca(2+). Positions 103, 105, 107, 109, and 114 each coordinate Ca(2+). Residues Asp169, Asp171, Asp173, and Trp175 each coordinate Mg(2+).

Homodimer and heterodimer; heterodimerizes (via the EF-hand 5) with PEF1. Isoform 1 and isoform 2 self-associate; probably forming homodimers. Interacts with CPNE4 (via VWFA domain). Interacts with PDCD6IP; the interaction is calcium-dependent. Interacts with RBM22. Interacts with PLSCR4. Interacts with ANXA7 and TSG101. Interacts with DAPK1. Interacts with SEC31A; the interaction is calcium-dependent and promotes monoubiquitination of SEC31A. Interacts with ANXA11 (via N-terminus); the interaction is calcium-dependent. Interacts with PLSCR3 (via N-terminus); the interaction is calcium-dependent. Interacts with MCOLN1; the interaction is calcium-dependent. Interacts with KDR; the interaction is calcium-dependent. Interacts with HEBP2; the interaction is calcium-dependent. Interacts with TFG. Isoform 1: Interacts with SHISA5, leading to stabilize it. Isoform 2: Does not interact with SHISA5. Isoform 2: Does not interact with PDCD6IP, TSG101, ANXA7 and ANXA11.

It is found in the endoplasmic reticulum membrane. Its subcellular location is the cytoplasmic vesicle. The protein localises to the COPII-coated vesicle membrane. The protein resides in the cytoplasm. It localises to the nucleus. It is found in the endosome. In terms of biological role, calcium sensor that plays a key role in processes such as endoplasmic reticulum (ER)-Golgi vesicular transport, endosomal biogenesis or membrane repair. Acts as an adapter that bridges unrelated proteins or stabilizes weak protein-protein complexes in response to calcium: calcium-binding triggers exposure of apolar surface, promoting interaction with different sets of proteins thanks to 3 different hydrophobic pockets, leading to translocation to membranes. Involved in ER-Golgi transport by promoting the association between PDCD6IP and TSG101, thereby bridging together the ESCRT-III and ESCRT-I complexes. Together with PEF1, acts as a calcium-dependent adapter for the BCR(KLHL12) complex, a complex involved in ER-Golgi transport by regulating the size of COPII coats. In response to cytosolic calcium increase, the heterodimer formed with PEF1 interacts with, and bridges together the BCR(KLHL12) complex and SEC31 (SEC31A or SEC31B), promoting monoubiquitination of SEC31 and subsequent collagen export, which is required for neural crest specification. Involved in the regulation of the distribution and function of MCOLN1 in the endosomal pathway. Promotes localization and polymerization of TFG at endoplasmic reticulum exit site. Required for T-cell receptor-, Fas-, and glucocorticoid-induced apoptosis. May mediate Ca(2+)-regulated signals along the death pathway: interaction with DAPK1 can accelerate apoptotic cell death by increasing caspase-3 activity. Its role in apoptosis may however be indirect, as suggested by knockout experiments. May inhibit KDR/VEGFR2-dependent angiogenesis; the function involves inhibition of VEGF-induced phosphorylation of the Akt signaling pathway. Its function is as follows. Has a lower Ca(2+) affinity than isoform 1. This Mus musculus (Mouse) protein is Programmed cell death protein 6 (Pdcd6).